A 303-amino-acid chain; its full sequence is Glycine--tRNA ligase alpha subunit (303 aa).

This sequence belongs to the class-II aminoacyl-tRNA synthetase family. Tetramer of two alpha and two beta subunits.

Its subcellular location is the cytoplasm. The enzyme catalyses tRNA(Gly) + glycine + ATP = glycyl-tRNA(Gly) + AMP + diphosphate. This Erwinia tasmaniensis (strain DSM 17950 / CFBP 7177 / CIP 109463 / NCPPB 4357 / Et1/99) protein is Glycine--tRNA ligase alpha subunit.